The chain runs to 130 residues: Small ribosomal subunit protein uS9 (130 aa).

It belongs to the universal ribosomal protein uS9 family.

The polypeptide is Small ribosomal subunit protein uS9 (Shewanella sediminis (strain HAW-EB3)).